Consider the following 65-residue polypeptide: Large ribosomal subunit protein bL35 (65 aa).

The tract at residues 1 to 65 (MPKIKTNRAA…GRLDRMLPYL (65 aa)) is disordered. The span at 10–44 (AAKRFRKTASGKYKAGHANRSHILTKKATKRKRNL) shows a compositional bias: basic residues. A compositionally biased stretch (basic and acidic residues) spans 50–65 (VRAEDAGRLDRMLPYL).

It belongs to the bacterial ribosomal protein bL35 family.

This chain is Large ribosomal subunit protein bL35, found in Xylella fastidiosa (strain M23).